A 222-amino-acid chain; its full sequence is MKKHLLPLALLFSGISPAQALDVGDISSFMNSDSSTLSKTIQNSTDSGRLINIRLERLSSPLDDGQVIAMDKPDELLLTPASLLLPAQASEVIRFFYKGPADEKERYYRIVWFDQALSDAQRDNANRSAVATASARIGTILVVAPRQANYHFQYANGSLTNTGNATLRILAYGPCLKAANGKECKENYYLMPGKSRRFTRVDTADNKGRVALWQGDKFIPVK.

A signal peptide spans 1–20 (MKKHLLPLALLFSGISPAQA).

This sequence belongs to the EcpB/EcpE family.

Functionally, part of the ecpRABCDE operon, which encodes the E.coli common pilus (ECP). ECP is found in both commensal and pathogenic strains and plays a dual role in early-stage biofilm development and host cell recognition. This chain is Probable fimbrial chaperone EcpB (ecpB), found in Escherichia coli O127:H6 (strain E2348/69 / EPEC).